The following is a 77-amino-acid chain: Small ribosomal subunit protein bS20 (77 aa).

This sequence belongs to the bacterial ribosomal protein bS20 family.

Functionally, binds directly to 16S ribosomal RNA. The polypeptide is Small ribosomal subunit protein bS20 (Streptococcus uberis (strain ATCC BAA-854 / 0140J)).